Reading from the N-terminus, the 67-residue chain is uncharacterized protein (67 aa).

The helical transmembrane segment at 4–24 (WIFAILMLGVAIVLSIIATFF) threads the bilayer.

Its subcellular location is the membrane. This is an uncharacterized protein from Bacillus anthracis.